The chain runs to 427 residues: Adenylosuccinate synthetase (427 aa).

GTP contacts are provided by residues 12–18 (GDEGKGK) and 40–42 (GHT). The active-site Proton acceptor is the Asp13. Mg(2+) contacts are provided by Asp13 and Gly40. IMP is bound by residues 13–16 (DEGK), 38–41 (NAGH), Thr126, Arg140, Gln221, Thr236, and Arg299. The Proton donor role is filled by His41. 295 to 301 (STTKRPR) lines the substrate pocket. Residues Arg301, 327–329 (KLD), and 409–411 (SVG) contribute to the GTP site.

It belongs to the adenylosuccinate synthetase family. As to quaternary structure, homodimer. Mg(2+) is required as a cofactor.

It is found in the cytoplasm. It carries out the reaction IMP + L-aspartate + GTP = N(6)-(1,2-dicarboxyethyl)-AMP + GDP + phosphate + 2 H(+). It functions in the pathway purine metabolism; AMP biosynthesis via de novo pathway; AMP from IMP: step 1/2. In terms of biological role, plays an important role in the de novo pathway of purine nucleotide biosynthesis. Catalyzes the first committed step in the biosynthesis of AMP from IMP. This is Adenylosuccinate synthetase from Borrelia duttonii (strain Ly).